A 79-amino-acid polypeptide reads, in one-letter code: MVKLRLKRCGRKQRAVYRILAIDVRYRREGRDLSKVGFYDPITNQTFLNLSAILDFLKKGAQPTRTAHDISKKAGIFTE.

It belongs to the bacterial ribosomal protein bS16 family.

Its subcellular location is the plastid. The protein resides in the chloroplast. The protein is Small ribosomal subunit protein bS16cz of Arabidopsis thaliana (Mouse-ear cress).